The following is a 754-amino-acid chain: 5-methyltetrahydropteroyltriglutamate--homocysteine methyltransferase (754 aa).

5-methyltetrahydropteroyltri-L-glutamate-binding positions include 17-20 (RELK) and K117. Residues 431–433 (IGS) and E484 each bind L-homocysteine. L-methionine-binding positions include 431–433 (IGS) and E484. 5-methyltetrahydropteroyltri-L-glutamate contacts are provided by residues 515–516 (RC) and W561. Position 599 (D599) interacts with L-homocysteine. D599 is a binding site for L-methionine. E605 provides a ligand contact to 5-methyltetrahydropteroyltri-L-glutamate. 3 residues coordinate Zn(2+): H641, C643, and E665. H694 (proton donor) is an active-site residue. Position 726 (C726) interacts with Zn(2+).

Belongs to the vitamin-B12 independent methionine synthase family. It depends on Zn(2+) as a cofactor.

It carries out the reaction 5-methyltetrahydropteroyltri-L-glutamate + L-homocysteine = tetrahydropteroyltri-L-glutamate + L-methionine. It participates in amino-acid biosynthesis; L-methionine biosynthesis via de novo pathway; L-methionine from L-homocysteine (MetE route): step 1/1. Its function is as follows. Catalyzes the transfer of a methyl group from 5-methyltetrahydrofolate to homocysteine resulting in methionine formation. This is 5-methyltetrahydropteroyltriglutamate--homocysteine methyltransferase from Pectobacterium atrosepticum (strain SCRI 1043 / ATCC BAA-672) (Erwinia carotovora subsp. atroseptica).